The primary structure comprises 70 residues: Large ribosomal subunit protein eL38 (70 aa).

This sequence belongs to the eukaryotic ribosomal protein eL38 family.

The protein is Large ribosomal subunit protein eL38 (RpL38) of Lonomia obliqua (Moth).